Consider the following 311-residue polypeptide: Acyl-CoA dehydrogenase IpdE2 (311 aa).

Residues Arg-206 and Gly-273 each contribute to the FAD site.

This sequence belongs to the acyl-CoA dehydrogenase family. In terms of assembly, heterotetramer composed of 2 IpdE1 subunits and 2 IpdE2 subunits. The cofactor is FAD.

It carries out the reaction 3-[(3aS,4S,5R,7aS)-5-hydroxy-7a-methyl-1-oxo-octahydro-1H-inden-4-yl]propanoyl-CoA + A = (2E)-3-[(3aS,4S,5R,7aS)-5-hydroxy-7a-methyl-1-oxo-octahydro-1H-inden-4-yl]prop-2-enoyl-CoA + AH2. It participates in steroid metabolism; cholesterol degradation. Involved in cholesterol degradation. Catalyzes the dehydrogenation of 5OH-HIP-CoA to 5OH-HIPE-CoA. The sequence is that of Acyl-CoA dehydrogenase IpdE2 from Mycolicibacterium smegmatis (strain ATCC 700084 / mc(2)155) (Mycobacterium smegmatis).